Consider the following 158-residue polypeptide: Transcription elongation factor GreA (158 aa).

The stretch at 53-73 forms a coiled coil; it reads EQQSFVEGRIQEIEGKLSNAQ.

Belongs to the GreA/GreB family.

In terms of biological role, necessary for efficient RNA polymerase transcription elongation past template-encoded arresting sites. The arresting sites in DNA have the property of trapping a certain fraction of elongating RNA polymerases that pass through, resulting in locked ternary complexes. Cleavage of the nascent transcript by cleavage factors such as GreA or GreB allows the resumption of elongation from the new 3'terminus. GreA releases sequences of 2 to 3 nucleotides. The sequence is that of Transcription elongation factor GreA from Alkalilimnicola ehrlichii (strain ATCC BAA-1101 / DSM 17681 / MLHE-1).